The chain runs to 236 residues: MSVSSLLQPNTYNINSKSQSLSNTPSNPTSQTNTLWSNNAYNPPHLMFGSSDLNNGTGPSGPKGDKGDPGSKGETGSQGIKGDPGVKGTTGGTIGSGTYFSGDLPSYVTTGGTETSIPEVSTGTVSFTTKTLGGNCNYSSGVFTTTETAAFYVAVTYIGTSVGSLSGSLTLSIFKNGGTAVYNTLVSYSGAGIQMSASLNGIIEMTPSDNIFIGFVNSGGEIQPNASGFTLNIFRI.

Residues 1-17 (MSVSSLLQPNTYNINSK) are compositionally biased toward polar residues. The tract at residues 1-94 (MSVSSLLQPN…GVKGTTGGTI (94 aa)) is disordered. Over residues 18 to 35 (SQSLSNTPSNPTSQTNTL) the composition is skewed to low complexity. The 34-residue stretch at 58–91 (GPSGPKGDKGDPGSKGETGSQGIKGDPGVKGTTG) folds into the Collagen-like domain.

Belongs to the sputnik virus V6 family.

This is an uncharacterized protein from Sputnik virophage.